Here is a 1165-residue protein sequence, read N- to C-terminus: Peroxisomal ATPase PEX6 (1165 aa).

It belongs to the AAA ATPase family. In terms of assembly, interacts with PEX1; forming the PEX1-PEX6 AAA ATPase complex, which is composed of a heterohexamer formed by a trimer of PEX1-PEX6 dimers.

Its subcellular location is the membrane. The catalysed reaction is ATP + H2O = ADP + phosphate + H(+). Its function is as follows. Component of the PEX1-PEX6 AAA ATPase complex involved in peroxisome biosynthesis. The complex acts as a protein dislocase complex that mediates the ATP-dependent extraction of the PEX5 receptor from peroxisomal membranes, an essential step for PEX5 recycling. Specifically recognizes PEX5 monoubiquitinated at 'Cys-6', and pulls it out of the peroxisome lumen through the PEX2-PEX10-PEX12 retrotranslocation channel. Extraction by the PEX1-PEX6 AAA ATPase complex is accompanied by unfolding of the TPR repeats and release of bound cargo from PEX5. The chain is Peroxisomal ATPase PEX6 from Komagataella pastoris (Yeast).